A 63-amino-acid polypeptide reads, in one-letter code: Large ribosomal subunit protein uL29 (63 aa).

This sequence belongs to the universal ribosomal protein uL29 family.

The polypeptide is Large ribosomal subunit protein uL29 (Bdellovibrio bacteriovorus (strain ATCC 15356 / DSM 50701 / NCIMB 9529 / HD100)).